Consider the following 878-residue polypeptide: Protein translocase subunit SecA (878 aa).

ATP is bound by residues Gln79, 97–101 (GEGKT), and Asp487.

It belongs to the SecA family.

It is found in the plastid. It localises to the chloroplast stroma. The protein localises to the chloroplast thylakoid membrane. The enzyme catalyses ATP + H2O + cellular proteinSide 1 = ADP + phosphate + cellular proteinSide 2.. In terms of biological role, has a central role in coupling the hydrolysis of ATP to the transfer of proteins across the thylakoid membrane. The polypeptide is Protein translocase subunit SecA (Antithamnion sp. (Red alga)).